Reading from the N-terminus, the 457-residue chain is Cysteine--tRNA ligase (457 aa).

Zn(2+) is bound at residue Cys-27. Residues 29–39 (PTVYDFAHIGN) carry the 'HIGH' region motif. Cys-211, His-236, and Glu-240 together coordinate Zn(2+). Positions 269–273 (KMSKS) match the 'KMSKS' region motif. Lys-272 lines the ATP pocket.

It belongs to the class-I aminoacyl-tRNA synthetase family. As to quaternary structure, monomer. It depends on Zn(2+) as a cofactor.

The protein localises to the cytoplasm. The catalysed reaction is tRNA(Cys) + L-cysteine + ATP = L-cysteinyl-tRNA(Cys) + AMP + diphosphate. This is Cysteine--tRNA ligase from Ehrlichia ruminantium (strain Gardel).